A 137-amino-acid polypeptide reads, in one-letter code: Nucleoside diphosphate kinase (137 aa).

Residues K10, F58, R86, T92, R103, and N113 each contribute to the ATP site. H116 (pros-phosphohistidine intermediate) is an active-site residue.

This sequence belongs to the NDK family. As to quaternary structure, homotetramer. It depends on Mg(2+) as a cofactor.

The protein resides in the cytoplasm. The enzyme catalyses a 2'-deoxyribonucleoside 5'-diphosphate + ATP = a 2'-deoxyribonucleoside 5'-triphosphate + ADP. It carries out the reaction a ribonucleoside 5'-diphosphate + ATP = a ribonucleoside 5'-triphosphate + ADP. Its function is as follows. Major role in the synthesis of nucleoside triphosphates other than ATP. The ATP gamma phosphate is transferred to the NDP beta phosphate via a ping-pong mechanism, using a phosphorylated active-site intermediate. In Helicobacter pylori (strain ATCC 700392 / 26695) (Campylobacter pylori), this protein is Nucleoside diphosphate kinase.